The following is a 337-amino-acid chain: Monoacylglycerol lipase ABHD6 (337 aa).

Over 1–19 the chain is Extracellular; the sequence is MDLDVVNMFVIAGGTLALP. The chain crosses the membrane as a helical; Signal-anchor for type II membrane protein span at residues 20–42; that stretch reads ILAFVASFLLWPSALIRIYYWYW. The Cytoplasmic segment spans residues 43–337; the sequence is RRTLGMQVRY…HSTDNSKKLD (295 aa). One can recognise an AB hydrolase-1 domain in the interval 72-313; that stretch reads PSILMLHGFS…CGHSVVMERP (242 aa). The active-site Nucleophile is the Ser-148. Catalysis depends on charge relay system residues Asp-278 and His-306.

The protein belongs to the AB hydrolase superfamily.

The protein resides in the late endosome membrane. It is found in the lysosome membrane. The protein localises to the mitochondrion membrane. It carries out the reaction Hydrolyzes glycerol monoesters of long-chain fatty acids.. The catalysed reaction is 1-octanoylglycerol + H2O = octanoate + glycerol + H(+). The enzyme catalyses 1-decanoylglycerol + H2O = decanoate + glycerol + H(+). It catalyses the reaction 1-dodecanoylglycerol + H2O = dodecanoate + glycerol + H(+). It carries out the reaction 1-tetradecanoylglycerol + H2O = tetradecanoate + glycerol + H(+). The catalysed reaction is 2-hexadecanoylglycerol + H2O = glycerol + hexadecanoate + H(+). The enzyme catalyses 2-(9Z-octadecenoyl)-glycerol + H2O = glycerol + (9Z)-octadecenoate + H(+). It catalyses the reaction 1-(9Z-octadecenoyl)-glycerol + H2O = glycerol + (9Z)-octadecenoate + H(+). It carries out the reaction 2-(9Z,12Z-octadecadienoyl)-glycerol + H2O = (9Z,12Z)-octadecadienoate + glycerol + H(+). The catalysed reaction is 2-(5Z,8Z,11Z,14Z-eicosatetraenoyl)-glycerol + H2O = glycerol + (5Z,8Z,11Z,14Z)-eicosatetraenoate + H(+). The enzyme catalyses 1-(5Z,8Z,11Z,14Z-eicosatetraenoyl)-glycerol + H2O = glycerol + (5Z,8Z,11Z,14Z)-eicosatetraenoate + H(+). It catalyses the reaction 1-(9Z,12Z-octadecadienoyl)-glycerol + H2O = (9Z,12Z)-octadecadienoate + glycerol + H(+). It carries out the reaction 3-(9Z-octadecenoyl)-sn-glycero-1-phospho-(3'-(9Z-octadecenoyl)-1'-sn-glycerol) + H2O = 3-(9Z-octadecenoyl)-sn-glycero-1-phospho-(1'-sn-glycerol) + (9Z)-octadecenoate + H(+). The catalysed reaction is (S,S)-2-(9Z-octadecenoyl)-sn-glycero-1-phospho-(2'-(9Z-octadecenoyl)-1'-sn-glycerol) + H2O = (S,S)-2-(9Z-octadecenoyl)-sn-glycero-1-phospho-(1'-sn-glycerol) + (9Z)-octadecenoate + H(+). The enzyme catalyses (R,R)-2-(9Z-octadecenoyl)-sn-glycero-3-phospho-(2'-(9Z-octadecenoyl)-3'-sn-glycerol) + H2O = (R,R)-2-(9Z-octadecenoyl)-sn-glycero-3-phospho-(3'-sn-glycerol) + (9Z)-octadecenoate + H(+). In terms of biological role, lipase that preferentially hydrolysis medium-chain saturated monoacylglycerols including 2-arachidonoylglycerol. Through 2-arachidonoylglycerol degradation may regulate endocannabinoid signaling pathways. Also has a lysophosphatidyl lipase activity with a preference for lysophosphatidylglycerol among other lysophospholipids. Also able to degrade bis(monoacylglycero)phosphate (BMP) and constitutes the major enzyme for BMP catabolism. BMP, also known as lysobisphosphatidic acid, is enriched in late endosomes and lysosomes and plays a key role in the formation of intraluminal vesicles and in lipid sorting. This chain is Monoacylglycerol lipase ABHD6, found in Bos taurus (Bovine).